Here is a 443-residue protein sequence, read N- to C-terminus: Serine/threonine-protein kinase 40 (443 aa).

A compositionally biased stretch (basic and acidic residues) spans 1-11 (MKRRASERDAG). Residues 1–26 (MKRRASERDAGETSARSKALCSSISG) are disordered. Polar residues predominate over residues 14–26 (SARSKALCSSISG). One can recognise a Protein kinase domain in the interval 35–332 (FILGPRLGNS…EVLESLGAII (298 aa)). Residues 41–49 (LGNSPVPSI) and Lys-66 contribute to the ATP site. Asp-197 acts as the Proton acceptor in catalysis.

This sequence belongs to the protein kinase superfamily. CAMK Ser/Thr protein kinase family.

The protein localises to the nucleus. Its subcellular location is the cytoplasm. It catalyses the reaction L-seryl-[protein] + ATP = O-phospho-L-seryl-[protein] + ADP + H(+). The enzyme catalyses L-threonyl-[protein] + ATP = O-phospho-L-threonyl-[protein] + ADP + H(+). Its function is as follows. May be a negative regulator of NF-kappa-B and p53-mediated gene transcription. The protein is Serine/threonine-protein kinase 40 (stk40) of Xenopus tropicalis (Western clawed frog).